We begin with the raw amino-acid sequence, 66 residues long: MAKGKDVRVRIILECASCVRNGINKELPGISRYITQKSRHNTPNRLELRKYCHYCRTHTIHGEIKK.

The protein belongs to the bacterial ribosomal protein bL33 family.

Its subcellular location is the plastid. The protein localises to the chloroplast. The chain is Large ribosomal subunit protein bL33c from Dioscorea elephantipes (Elephant's foot yam).